Here is a 228-residue protein sequence, read N- to C-terminus: MWQAQIFTLYPDFFPGPLNKGLYGKALTNKIWDLKVVNFREAAEDKHKTVDDTPFGGGSGMLLKADILAKSLDENKKEGERIFYLSPKGKKLDQKLALELSKEKSISLICGHFEGVDERLLSTRNIEELSIGDFILSGGETAAFVVLDSVLRLLPGVLGNEQSKNDESFENGLLEYPQYTKPQIWEEKSVPEVLLSGDHNKIKDWRLSQSEAITRVRRPDLWEKYKKN.

Residues Gly111 and 131-136 (IGDFIL) contribute to the S-adenosyl-L-methionine site.

The protein belongs to the RNA methyltransferase TrmD family. Homodimer.

The protein resides in the cytoplasm. The catalysed reaction is guanosine(37) in tRNA + S-adenosyl-L-methionine = N(1)-methylguanosine(37) in tRNA + S-adenosyl-L-homocysteine + H(+). Functionally, specifically methylates guanosine-37 in various tRNAs. In Pelagibacter ubique (strain HTCC1062), this protein is tRNA (guanine-N(1)-)-methyltransferase.